We begin with the raw amino-acid sequence, 248 residues long: Ribonuclease 3 (248 aa).

An RNase III domain is found at 16–145; sequence TEGLETSIGY…LLAAMYLDGG (130 aa). Glu58 is a Mg(2+) binding site. Asp62 is a catalytic residue. Asn131 and Glu134 together coordinate Mg(2+). Glu134 is an active-site residue. Positions 172–241 constitute a DRBM domain; sequence DFKTDFQELA…ARQCLERLET (70 aa).

This sequence belongs to the ribonuclease III family. As to quaternary structure, homodimer. Mg(2+) is required as a cofactor.

It localises to the cytoplasm. It catalyses the reaction Endonucleolytic cleavage to 5'-phosphomonoester.. Functionally, digests double-stranded RNA. Involved in the processing of primary rRNA transcript to yield the immediate precursors to the large and small rRNAs (23S and 16S). Processes some mRNAs, and tRNAs when they are encoded in the rRNA operon. Processes pre-crRNA and tracrRNA of type II CRISPR loci if present in the organism. The chain is Ribonuclease 3 from Geobacter sulfurreducens (strain ATCC 51573 / DSM 12127 / PCA).